Here is a 92-residue protein sequence, read N- to C-terminus: Small ribosomal subunit protein uS19c (92 aa).

It belongs to the universal ribosomal protein uS19 family.

It is found in the plastid. The protein resides in the chloroplast. In terms of biological role, protein S19 forms a complex with S13 that binds strongly to the 16S ribosomal RNA. In Pyropia yezoensis (Susabi-nori), this protein is Small ribosomal subunit protein uS19c.